Here is a 727-residue protein sequence, read N- to C-terminus: Translation initiation factor IF-2, mitochondrial (727 aa).

The transit peptide at 1–29 (MNQKLLKLENLLRFHTICRQVHSPSQRRL) directs the protein to the mitochondrion. The 169-residue stretch at 178-346 (PRSPVVTVMG…ATIALAEILE (169 aa)) folds into the tr-type G domain. The segment at 187 to 194 (GHVDHGKT) is G1. 187–194 (GHVDHGKT) provides a ligand contact to GTP. Residues 212–216 (GITQH) are G2. GTP is bound by residues 234–237 (DTPG) and 288–291 (NKCD). The segment at 234 to 237 (DTPG) is G3. The tract at residues 288–291 (NKCD) is G4. The interval 324-326 (SAL) is G5. Phosphothreonine is present on T688.

Belongs to the TRAFAC class translation factor GTPase superfamily. Classic translation factor GTPase family. IF-2 subfamily. In terms of assembly, monomer.

It localises to the mitochondrion. Its function is as follows. One of the essential components for the initiation of protein synthesis. Protects formylmethionyl-tRNA from spontaneous hydrolysis and promotes its binding to the 30S ribosomal subunits. Also involved in the hydrolysis of GTP during the formation of the 70S ribosomal complex. The chain is Translation initiation factor IF-2, mitochondrial (Mtif2) from Mus musculus (Mouse).